The chain runs to 312 residues: Ribosomal protein uL3 glutamine methyltransferase (312 aa).

It belongs to the protein N5-glutamine methyltransferase family. PrmB subfamily.

The catalysed reaction is L-glutaminyl-[ribosomal protein uL3] + S-adenosyl-L-methionine = N(5)-methyl-L-glutaminyl-[ribosomal protein uL3] + S-adenosyl-L-homocysteine + H(+). In terms of biological role, methylates large ribosomal subunit protein uL3 on a specific glutamine residue. This is Ribosomal protein uL3 glutamine methyltransferase from Xylella fastidiosa (strain Temecula1 / ATCC 700964).